The sequence spans 936 residues: MAVFPWHSRNRNYKAELASCRLETVPLECGDYHPLKPITVTESKTKKVSRKGSTSSTSSSSSSSVVDPLSSVLDGTDPLSMFAATSDPAATVTVTESSRKKRDKDDNSFVGPDFEPWANKRGEILARYTTTEKLSINLFMGSEKGRAGAAASAMSEKVRTRLEELDDFEEGSQKELLNLTQQDYVNRIEELNQSLKDAWASDQKVKALKIVIQCSKLLSDTSVIQFYPSKFVLITDILDTFGKLVYERIYSMCVDSRGALPDHFSPENVNDTAKETCLNWFFKIASIRELIPRFYVEASILKCNKFLSKTGISECLPRLTCMIRGIGDPLVSVYARAYLCRVGMEVAPHLKESLTRNFFDFLLTFKQIHGDTVQNQLVAQGVELLSYLPLYSPAMGWIFQCVSYHAPEALLTEMMERCKKLGNNALLLNSVMSAFRAEFIATRSMDFIGMIKECDESGFPKHLLFRSLGVNLALADPPENDRLQILNEAWKVITKLKSPQDYINCAEVWVEYTCRHFTKREVNTVLADVIKHMTPDRAFEDSYPQLQSIIKKVIAHFHDFSVLFSVEKFLPFLDMFQKESVRVEVCKCIMEAFINALTLEDEKRMLAHLINGFIKMVSFGRDFEQQLSFYVESRSMFCNLEPVLVQLIHSVNRLAMETRKVMKGNHSRKTAAFVRACVAYCFITIPSLVGIFTRLNLYLHSGQVALANQCLSQADAFFKAAISLVPEVPKSISIDGKLRPSEPFLLEFLCNFFSTLLIVPDHPEHGVLFLVRELLNVIQDYTWEDSSDDKIRIYTSVLHLLSAMSQDTYLYHIDKVDSNDSLYGGDSRFLAENSKLCEAAMVQILEHLKTLAKDEALKRQSLLGLSFFNSILAHGDLRNNKLNQLSVNLWHLAQRHGCADTRTMVKTLDYIKKRSKQPDMNHLSELALRLPLQTRT.

2 disordered regions span residues 43–69 and 87–113; these read SKTK…VDPL and DPAA…VGPD. Over residues 51-69 the composition is skewed to low complexity; that stretch reads KGSTSSTSSSSSSSVVDPL. Serine 265 bears the Phosphoserine mark. The chain crosses the membrane as a helical span at residues 672–692; sequence AFVRACVAYCFITIPSLVGIF.

The protein belongs to the VPS35L family. Component of the heterotrimeric retriever complex formed by VPS26C, VPS29 and VPS35L. Interacts with VPS29. Interacts with COMMD1, CCDC93 and CCDC22; associates with the CCC (COMMD/CCDC22/CCDC93) complex which contains at least COMMD1 (and possibly other COMM domain-containing proteins), CCDC22 and CCDC93. Interacts with WASHC1, WASHC2A and WASHC2C. Interacts with SNX17 and SNX31.

The protein resides in the membrane. It localises to the endosome. Acts as a component of the retriever complex. The retriever complex is a heterotrimeric complex related to retromer cargo-selective complex (CSC) and essential for retromer-independent retrieval and recycling of numerous cargos such as integrin alpha-5/beta-1 (ITGA5:ITGB1). The recruitment of the retriever complex to the endosomal membrane involves CCC and WASH complexes. In the endosomes, drives the retrieval and recycling of NxxY-motif-containing cargo proteins by coupling to SNX17, a cargo essential for the homeostatic maintenance of numerous cell surface proteins associated with processes that include cell migration, cell adhesion, nutrient supply and cell signaling. Involved in copper-dependent ATP7A trafficking between the trans-Golgi network and vesicles in the cell periphery; the function is proposed to depend on its association with the CCC complex and cooperation with the WASH complex on early endosomes. Seems not to be required for CCC complex stability. The protein is VPS35 endosomal protein-sorting factor-like of Rattus norvegicus (Rat).